Reading from the N-terminus, the 127-residue chain is UPF0102 protein NFA_41430 (127 aa).

Belongs to the UPF0102 family.

This is UPF0102 protein NFA_41430 from Nocardia farcinica (strain IFM 10152).